The sequence spans 192 residues: Cytochrome b-245 light chain (192 aa).

The Cytoplasmic segment spans residues 2–7 (GQIEWA). Residues 8 to 30 (MWANEQALASGLILMTGGIVATA) traverse the membrane as a helical segment. Residues 31 to 35 (GQFTQ) are Extracellular-facing. The chain crosses the membrane as a helical span at residues 36–53 (WYLGTYSIAAGVLVCLLE). Residues 54-69 (YPRGRRTKGSTMERCE) are Cytoplasmic-facing. The stretch at 70–80 (QKYMTKVVKAF) is an intramembrane region. Topologically, residues 81–86 (GPLSRN) are cytoplasmic. A helical membrane pass occupies residues 87-104 (YYIRAFLHLGLSVPAGFL). Leucine 105 is a topological domain (extracellular). The chain crosses the membrane as a helical span at residues 106–126 (ATILGTACLAIASGIYLLAAI). Topologically, residues 127 to 192 (RGEQWTPIEP…TPCPVTDEVV (66 aa)) are cytoplasmic. A disordered region spans residues 134–192 (IEPKPKERPQVGGTIKQPPSNPPPRPPPEARKKPGEEAVAGVPRGAPRKTPCPVTDEVV). Position 147 is a phosphothreonine (threonine 147). Residue lysine 149 forms a Glycyl lysine isopeptide (Lys-Gly) (interchain with G-Cter in ubiquitin) linkage.

This sequence belongs to the p22phox family. As to quaternary structure, component of the phagocyte NADPH oxidase core complex/cytochrome b558 complex, composed of CYBB (heavy chain (beta)) and CYBA (light chain (alpha)). Component of the phagocyte NADPH oxidase complex composed of an obligatory core heterodimer formed by the membrane proteins CYBA and CYBB and the cytosolic regulatory subunits NCF1/p47-phox, NCF2/p67-phox, NCF4/p40-phox and the small GTPase RAC1 or RAC2. Interacts with NCF1 (via SH3 domain). Interacts with SH3PXD2A. Interacts with DUOX1, DUOX2 and TPO. Interacts with NOX4; this interaction mediates superoxide generation. Interacts with calprotectin (S100A8/9). Interacts with GBP7. Interacts with NOXO1. Forms a heterodimer with NOX3 and is essential for activity and cell membrane localization of NOX3. Interacts with NOX1. In terms of processing, phosphorylation at Thr-147 enhances NADPH oxidase activity by promoting NCF1/p47-phox binding. Ubiquitinated at Lys-149 likely by RNF145.

It is found in the cell membrane. Its function is as follows. Subunit of NADPH oxidase complexes that is required for the NADPH oxidase activity that generates, in various cell types, superoxide from molecular oxygen utilizing NADPH as an electron donor. Subunit of the phagocyte NADPH oxidase complex that mediates the transfer of electrons from cytosolic NADPH to O2 to produce the superoxide anion (O2(-)). In the activated complex, electrons are first transferred from NADPH to flavin adenine dinucleotide (FAD) and subsequently transferred via two heme molecules to molecular oxygen, producing superoxide through an outer-sphere reaction. Activation of the NADPH oxidase complex is initiated by the assembly of cytosolic subunits of the NADPH oxidase complex with the core NADPH oxidase complex to form a complex at the plasma membrane or phagosomal membrane. This activation process is initiated by phosphorylation dependent binding of the cytosolic NCF1/p47-phox subunit to the C-terminus of CYBA/p22-phox. Aassociates with NOX3 to form a functional NADPH oxidase constitutively generating superoxide. The protein is Cytochrome b-245 light chain of Sus scrofa (Pig).